Reading from the N-terminus, the 349-residue chain is Histidinol-phosphate aminotransferase (349 aa).

An N6-(pyridoxal phosphate)lysine modification is found at Lys206.

This sequence belongs to the class-II pyridoxal-phosphate-dependent aminotransferase family. Histidinol-phosphate aminotransferase subfamily. Homodimer. The cofactor is pyridoxal 5'-phosphate.

It catalyses the reaction L-histidinol phosphate + 2-oxoglutarate = 3-(imidazol-4-yl)-2-oxopropyl phosphate + L-glutamate. The protein operates within amino-acid biosynthesis; L-histidine biosynthesis; L-histidine from 5-phospho-alpha-D-ribose 1-diphosphate: step 7/9. The polypeptide is Histidinol-phosphate aminotransferase (Streptococcus mutans serotype c (strain ATCC 700610 / UA159)).